The chain runs to 185 residues: Ribosome-recycling factor (185 aa).

It belongs to the RRF family.

Its subcellular location is the cytoplasm. In terms of biological role, responsible for the release of ribosomes from messenger RNA at the termination of protein biosynthesis. May increase the efficiency of translation by recycling ribosomes from one round of translation to another. The polypeptide is Ribosome-recycling factor (Nitrosospira multiformis (strain ATCC 25196 / NCIMB 11849 / C 71)).